Reading from the N-terminus, the 399-residue chain is Sperm equatorial segment protein 1 (399 aa).

Residues 1-18 (MKLVVLVALWLWPSSLLA) form the signal peptide. The N-linked (GlcNAc...) asparagine glycan is linked to N128. Residues 136 to 145 (EEPFIEKEPE) are compositionally biased toward basic and acidic residues. A disordered region spans residues 136-250 (EEPFIEKEPE…PSAEDLPGRH (115 aa)). Residues 157 to 167 (PEPELEPEPEP) show a composition bias toward acidic residues. Polar residues predominate over residues 182–206 (VTSTTPNKELTGTSRISSMATQPAN). Over residues 207 to 225 (TQATRITVTVKTTSTMDVS) the composition is skewed to low complexity.

The protein belongs to the SPESP1 family. In terms of processing, glycosylated. In testis there are two predominant forms of 77- and 67-kDa and a form of 47-kDa, whereas in epididymal sperm from caput, corpus, and cauda there are two forms of 47- and 43-kDa. Testis forms contain complex carbohydrate residues. Epididymal sperm forms are N-glycosylated. Then undergoes significant glycosylation in the testis and that the majority of these glycoconjugates are removed by the time sperm reach the caput epididymis. Testis specific.

Its subcellular location is the cytoplasmic vesicle. The protein resides in the secretory vesicle. It localises to the acrosome. Involved in fertilization ability of sperm. In Mus musculus (Mouse), this protein is Sperm equatorial segment protein 1.